The sequence spans 216 residues: Sarcospan (216 aa).

The Cytoplasmic portion of the chain corresponds to 1–26 (MGRKPSPRAQELPEEEARTCCGCRFP). Residues 27–47 (LLLALLQLALGIAVTVLGFLM) traverse the membrane as a helical segment. At 48–59 (ASISPSLLVRDT) the chain is on the extracellular side. Residues 60 to 80 (PFWAGSIVCVVAYLGLFMLCV) form a helical membrane-spanning segment. Topologically, residues 81–95 (SYQVDERTCVQFSMK) are cytoplasmic. A helical transmembrane segment spans residues 96–116 (VFYFLLSALGLMVCMLAVAFA). Residues 117–166 (AHHYSLLAQFTCETSLDSCQCKLPSSEPLSRAFVYRDVTDCTSVTGTFKL) are Extracellular-facing. The helical transmembrane segment at 167–187 (FLIIQMVLNLVCGLVCLLACF) threads the bilayer. Residues 188-216 (VMWKHRYQVFYVGVGLRSLMASDGQLPKA) are Cytoplasmic-facing.

Its subcellular location is the cell membrane. The protein localises to the sarcolemma. It localises to the postsynaptic cell membrane. Functionally, component of the dystrophin-glycoprotein complex (DGC), a complex that spans the muscle plasma membrane and forms a link between the F-actin cytoskeleton and the extracellular matrix. Preferentially associates with the sarcoglycan subcomplex of the DGC. This Mus musculus (Mouse) protein is Sarcospan (Sspn).